The following is a 156-amino-acid chain: MPRKGPAPKRPVMVDPVYGSPLVSQLVSKILLDGKKTVAQNIVYTALEGCRAKNNTDPVQTLKRALDNIKPSLEVKSRRVGGATYQVPVEVKPARQTTLAMRWLVNFSRERREKTMAERLMNEILDASNGLGASVKRREDTHKMAEANRAFAHYRW.

The protein belongs to the universal ribosomal protein uS7 family. In terms of assembly, part of the 30S ribosomal subunit. Contacts proteins S9 and S11.

In terms of biological role, one of the primary rRNA binding proteins, it binds directly to 16S rRNA where it nucleates assembly of the head domain of the 30S subunit. Is located at the subunit interface close to the decoding center, probably blocks exit of the E-site tRNA. The sequence is that of Small ribosomal subunit protein uS7 from Cutibacterium acnes (strain DSM 16379 / KPA171202) (Propionibacterium acnes).